We begin with the raw amino-acid sequence, 278 residues long: Cation-dependent mannose-6-phosphate receptor (278 aa).

Positions 1–21 are cleaved as a signal peptide; sequence MFPFSGCWRTELLLLLLLAVA. Residues 22–186 lie on the Lumenal side of the membrane; sequence VRESWQIEEK…SLACSPEVSH (165 aa). The MRH domain maps to 31 to 182; that stretch reads KSCDLVGEKD…EMDSSLACSP (152 aa). Cys-33 and Cys-79 are disulfide-bonded. 5 N-linked (GlcNAc...) asparagine glycosylation sites follow: Asn-58, Asn-84, Asn-95, Asn-108, and Asn-114. 2 cysteine pairs are disulfide-bonded: Cys-133–Cys-168 and Cys-146–Cys-180. A helical transmembrane segment spans residues 187–211; that stretch reads LSVGSILLVIFASLVAVYIIGGFLY. The Cytoplasmic portion of the chain corresponds to 212–278; sequence QRLVVGAKGM…EERDDHLLPM (67 aa). The disordered stretch occupies residues 257 to 278; the sequence is RGVGDDQLGEESEERDDHLLPM. Ser-268 carries the post-translational modification Phosphoserine.

In terms of assembly, homodimer. Binds GGA1, GGA2 and GGA3.

The protein localises to the lysosome membrane. Its function is as follows. Transport of phosphorylated lysosomal enzymes from the Golgi complex and the cell surface to lysosomes. Lysosomal enzymes bearing phosphomannosyl residues bind specifically to mannose-6-phosphate receptors in the Golgi apparatus and the resulting receptor-ligand complex is transported to an acidic prelyosomal compartment where the low pH mediates the dissociation of the complex. This chain is Cation-dependent mannose-6-phosphate receptor (M6pr), found in Mus musculus (Mouse).